The chain runs to 150 residues: UPF0260 protein PputGB1_4117 (150 aa).

This sequence belongs to the UPF0260 family.

The protein is UPF0260 protein PputGB1_4117 of Pseudomonas putida (strain GB-1).